Here is a 246-residue protein sequence, read N- to C-terminus: E3 ubiquitin-protein ligase MARCHF2 (246 aa).

The segment at 56-116 (DTPSDCPFCR…ELCHTEFAVE (61 aa)) adopts an RING-CH-type zinc-finger fold. Residues Cys64, Cys67, Cys80, Cys82, His90, Cys93, Cys106, and Cys109 each coordinate Zn(2+). The tract at residues 121-246 (PLTEWLKDPG…LKKVAEETPV (126 aa)) is required for interaction with IKBKG. The next 2 membrane-spanning stretches (helical) occupy residues 138 to 158 (LCCD…SGWL) and 175 to 195 (AVGL…WTLV).

Interacts with STX6; the interaction promotes MARCHF2-mediated ubiquitination and degradation of CFTR. Interacts with MARCHF3. Interacts with GOPC/CAL; the interaction leads to CFTR ubiquitination and degradation. Interacts with CFTR; the interaction leads to CFTR ubiqtuitination and degradation. Interacts (via PDZ domain) with DLG1 (via PDZ domains); the interaction leads to DLG1 ubiqtuitination and degradation. Interacts with ERGIC3. Interacts with ADRB2. Interacts with IKBKG/NEMO; during the late stages of macrophage viral and bacterial infection; the interaction leads to ubiquitination and degradation of IKBKG/NEMO. As to expression, ubiquitously expressed. Present in liver (at protein level).

The protein localises to the endoplasmic reticulum membrane. It localises to the lysosome membrane. The protein resides in the endosome membrane. Its subcellular location is the golgi apparatus membrane. It is found in the cytoplasm. The protein localises to the cell membrane. It catalyses the reaction S-ubiquitinyl-[E2 ubiquitin-conjugating enzyme]-L-cysteine + [acceptor protein]-L-lysine = [E2 ubiquitin-conjugating enzyme]-L-cysteine + N(6)-ubiquitinyl-[acceptor protein]-L-lysine.. Its pathway is protein modification; protein ubiquitination. In terms of biological role, E3 ubiquitin-protein ligase that may mediate ubiquitination of TFRC and CD86, and promote their subsequent endocytosis and sorting to lysosomes via multivesicular bodies. E3 ubiquitin ligases accept ubiquitin from an E2 ubiquitin-conjugating enzyme in the form of a thioester and then directly transfer the ubiquitin to targeted substrates. Together with GOPC/CAL mediates the ubiquitination and lysosomal degradation of CFTR. Ubiquitinates and therefore mediates the degradation of DLG1. Regulates the intracellular trafficking and secretion of alpha1-antitrypsin/SERPINA1 and HP/haptoglobin via ubiquitination and degradation of the cargo receptor ERGIC3. Negatively regulates the antiviral and antibacterial immune response by repression of the NF-kB and type 1 IFN signaling pathways, via MARCHF2-mediated K48-linked polyubiquitination of IKBKG/NEMO, resulting in its proteasomal degradation. May be involved in endosomal trafficking through interaction with STX6. The protein is E3 ubiquitin-protein ligase MARCHF2 (Marchf2) of Rattus norvegicus (Rat).